Here is a 701-residue protein sequence, read N- to C-terminus: Interleukin-1 receptor accessory protein-like 1-A (701 aa).

An N-terminal signal peptide occupies residues 1–19 (MTALNPVLFLLCGVSVSLS). At 20–361 (LKVVSKRGSV…IGKRVELMYT (342 aa)) the chain is on the extracellular side. Positions 33–133 (TDWSVDYLKY…RNSTFCMKVS (101 aa)) constitute an Ig-like C2-type 1 domain. A disulfide bridge connects residues Cys-54 and Cys-121. Residues Asn-64, Asn-125, Asn-141, Asn-216, Asn-267, and Asn-334 are each glycosylated (N-linked (GlcNAc...) asparagine). 2 consecutive Ig-like C2-type domains span residues 146–235 (CYNS…TYLS) and 245–353 (PRIL…VQIG). Residues Cys-167 and Cys-219 are joined by a disulfide bond. Cys-270 and Cys-337 are joined by a disulfide. Residues 362-382 (VELAGGLGAILLLLALLLSVY) form a helical membrane-spanning segment. The Cytoplasmic portion of the chain corresponds to 383 to 701 (KCYRIELLLC…RETSISSVIW (319 aa)). Positions 407–563 (KEYDAYLSYS…RFWKQLRYTM (157 aa)) constitute a TIR domain. Glu-495 is a catalytic residue. The segment at 568–701 (PQQTITNHAL…RETSISSVIW (134 aa)) is required for synaptic vesicle accumulation during synaptogenesis.

The protein belongs to the interleukin-1 receptor family.

Its subcellular location is the cell membrane. The protein resides in the cytoplasm. It catalyses the reaction NAD(+) + H2O = ADP-D-ribose + nicotinamide + H(+). Its function is as follows. May regulate secretion and presynaptic differentiation through inhibition of the activity of N-type voltage-gated calcium channel. During presynaptic differentiation may regulate both synaptic vesicle accumulation in axon terminals and subsequent axon terminal remodeling. The protein is Interleukin-1 receptor accessory protein-like 1-A (il1rapl1a) of Danio rerio (Zebrafish).